The chain runs to 246 residues: Ribonuclease 3 (246 aa).

The RNase III domain occupies 20-145 (FSKLEKILGF…FVGAIYLDRG (126 aa)). Position 62 (Glu62) interacts with Mg(2+). Asp66 is an active-site residue. Residues Asn131 and Glu134 each coordinate Mg(2+). The active site involves Glu134. Residues 173–241 (SYKSLLIEWC…SKRGYFVFQS (69 aa)) form the DRBM domain.

It belongs to the ribonuclease III family. In terms of assembly, homodimer. The cofactor is Mg(2+).

The protein localises to the cytoplasm. It carries out the reaction Endonucleolytic cleavage to 5'-phosphomonoester.. Digests double-stranded RNA. Involved in the processing of primary rRNA transcript to yield the immediate precursors to the large and small rRNAs (23S and 16S). Processes some mRNAs, and tRNAs when they are encoded in the rRNA operon. Processes pre-crRNA and tracrRNA of type II CRISPR loci if present in the organism. The protein is Ribonuclease 3 of Flavobacterium psychrophilum (strain ATCC 49511 / DSM 21280 / CIP 103535 / JIP02/86).